We begin with the raw amino-acid sequence, 412 residues long: Gamma-glutamyl phosphate reductase (412 aa).

This sequence belongs to the gamma-glutamyl phosphate reductase family.

The protein resides in the cytoplasm. It catalyses the reaction L-glutamate 5-semialdehyde + phosphate + NADP(+) = L-glutamyl 5-phosphate + NADPH + H(+). It participates in amino-acid biosynthesis; L-proline biosynthesis; L-glutamate 5-semialdehyde from L-glutamate: step 2/2. Its function is as follows. Catalyzes the NADPH-dependent reduction of L-glutamate 5-phosphate into L-glutamate 5-semialdehyde and phosphate. The product spontaneously undergoes cyclization to form 1-pyrroline-5-carboxylate. The chain is Gamma-glutamyl phosphate reductase from Actinobacillus pleuropneumoniae serotype 7 (strain AP76).